Reading from the N-terminus, the 1172-residue chain is MEIINNQNQYVPYNCLSNPENEILDIESLSSRSREQVAEISLGLTRFLLESLLPGASFGFALFDIIWGVIGPDQWNLFLAQIEQLIDQRIEAHVRNQAISRLEGLGDSYEVYIESLREWEASPNNEALQQDVRNRFSNTDNALITAIPILREQGFEIPLLSVYVQAANLHLSLLRDAVYFGQRWGLDTVTVNNHYNRLINLINTYSDHCAQWFNRGLDNFGGVSARYLDFQREVTISVLDIVALFPNYDIRTYPISTQSQLTREIYTSPVAEPGASLNANLQNILREPHLMDFLTRLVIYTGVQSGIYHWAGHEISSRTTGNLSSNIQFPLYGTAASADRAFNMNIHHSETIYRTLSAPIYSVSGGISPNRTRVVEGVRFLIARDNNLDSLPFLYRKEGTLDSFTELPPEDESTPPYIGYSHRLCHARFARSPVILEPSNFARLPVFSWTHRSASPTNEVSPSRITQIPWVKAHTLASGASVIKGPGFTGGDIMTRNNINLGDLGTLRVTVTGRLPQSYYIRLRYASVANSSGVFRHLPQPSYGISFPRTMGTDEPLTSRSFALTTLFTPITLTRAQEEFNLTIPRGVYIDRIEFVPVDATFEAGYDLERAQKAVNALFTSTNQRGLKTDITDYHIDQVSNLVECLSDEFCLDEKRELSEKVKHAKRLSDGRNLLQDRNFISINGLLDRGWRGSTDITIQGSDDVFKENYVTLPGTFDECYPTYLYQKIDESKLKAYTRYQLRGYIEDSQDLEIYLIRYNAKHEIVNVPGTGSLWPLSVENSIGPCGESNRCAPHLEWNPNLDCSCRDGEKCAHHSHHFSLDIDVGCTDLNEDLGVWVIFKIKTQDGHARIGNLEFLEEKPLVGEALARVKRAEKKWRDKRKKLEFETNIVYKEAKESVDALFVNSQYDKLKADTNIAMIHAADKRVHRIREAYLPELSVIPGVNADIFEELEGRIFTAYSLYDARNVIKNGDFNNGLLCWNVKGHVDVEEQNNHRSVLVVPEWEAEVSQEVRVCPGRGYILRVTAYKEGYGEGCVTIHEIEDNTDELKFSNCVEEEVYPSNTVTCNDYTANQEEYEGTYTSRNQGYDEAYESNSSVPANYASVYEEKAYTDGRRENSCEFNRGYRDYTPLPAGYVTKELEYFPGTAKVWIEIGETEGTFIVDSVELLLMEE.

Belongs to the delta endotoxin family.

Its function is as follows. Promotes colloidosmotic lysis by binding to the midgut epithelial cells of insects. The sequence is that of Pesticidal crystal protein Cry1Ha (cry1Ha) from Bacillus thuringiensis.